Consider the following 349-residue polypeptide: UDP-N-acetylenolpyruvoylglucosamine reductase (349 aa).

The 172-residue stretch at 26 to 197 (FDARARVAAR…VAVTFRLPKA (172 aa)) folds into the FAD-binding PCMH-type domain. Residue arginine 173 is part of the active site. The active-site Proton donor is serine 249. The active site involves glutamate 345.

The protein belongs to the MurB family. Requires FAD as cofactor.

Its subcellular location is the cytoplasm. The enzyme catalyses UDP-N-acetyl-alpha-D-muramate + NADP(+) = UDP-N-acetyl-3-O-(1-carboxyvinyl)-alpha-D-glucosamine + NADPH + H(+). The protein operates within cell wall biogenesis; peptidoglycan biosynthesis. Cell wall formation. The chain is UDP-N-acetylenolpyruvoylglucosamine reductase from Burkholderia pseudomallei (strain 1710b).